We begin with the raw amino-acid sequence, 113 residues long: Large ribosomal subunit protein bL17 (113 aa).

It belongs to the bacterial ribosomal protein bL17 family. As to quaternary structure, part of the 50S ribosomal subunit. Contacts protein L32.

In Natranaerobius thermophilus (strain ATCC BAA-1301 / DSM 18059 / JW/NM-WN-LF), this protein is Large ribosomal subunit protein bL17.